Reading from the N-terminus, the 157-residue chain is Ribosome maturation factor RimP (157 aa).

The protein belongs to the RimP family.

The protein localises to the cytoplasm. Required for maturation of 30S ribosomal subunits. This Thermobifida fusca (strain YX) protein is Ribosome maturation factor RimP.